Here is a 375-residue protein sequence, read N- to C-terminus: MAAAMASHVSTARSPALSFSSSSSSFFPGTTLRRFSAVSLPSPALPRLRVSCQASSVTSPSSPSDVKGKSDLKDFLAIDDFDTATIKTILDKASEVKALLKSGERNYLPFKGKSMSMIFAKPSMRTRVSFETGFFLLGGHALYLGPNDIQMGKREETRDVARVLSRYNDIIMARVFAHQDILDLANYSSVPVVNGLTDHNHPCQIMADALTMIEHIGQVEGTKVVYVGDGNNMVHSWLELASVIPFHFVCACPKGYEPDKERVSKAKQAGLSKIEITNDPKEAVIGADVVYSDVWASMGQKDEAEARRKAFQGFQVDEALMKLAGQKAYFMHCLPAERGVEVTNGVVEAPYSIVFPQAENRMHAQNAIMLHLLGF.

The transit peptide at 1–53 (MAAAMASHVSTARSPALSFSSSSSSFFPGTTLRRFSAVSLPSPALPRLRVSCQ) directs the protein to the chloroplast. An N-acetylalanine modification is found at A54. Carbamoyl phosphate-binding positions include 123–126 (SMRT), R174, H201, and Q204. Positions 232, 293, 297, and 298 each coordinate L-ornithine. Residue C333 is the Proton acceptor of the active site. Residues 333 to 334 (CL) and R361 contribute to the carbamoyl phosphate site.

Belongs to the aspartate/ornithine carbamoyltransferase superfamily. OTCase family.

Its subcellular location is the plastid. The protein localises to the chloroplast. The enzyme catalyses carbamoyl phosphate + L-ornithine = L-citrulline + phosphate + H(+). The chain is Ornithine transcarbamylase, chloroplastic (OTC) from Arabidopsis thaliana (Mouse-ear cress).